We begin with the raw amino-acid sequence, 437 residues long: CCA-adding enzyme (437 aa).

ATP-binding residues include serine 50 and lysine 53. CTP contacts are provided by serine 50 and lysine 53. Residues aspartate 61, aspartate 63, and aspartate 112 each contribute to the Mg(2+) site. Residues histidine 135, lysine 155, and tyrosine 164 each coordinate ATP. CTP is bound by residues histidine 135, lysine 155, and tyrosine 164.

It belongs to the tRNA nucleotidyltransferase/poly(A) polymerase family. Archaeal CCA-adding enzyme subfamily. Homodimer. Mg(2+) serves as cofactor.

The catalysed reaction is a tRNA precursor + 2 CTP + ATP = a tRNA with a 3' CCA end + 3 diphosphate. It catalyses the reaction a tRNA with a 3' CCA end + 2 CTP + ATP = a tRNA with a 3' CCACCA end + 3 diphosphate. Its function is as follows. Catalyzes the addition and repair of the essential 3'-terminal CCA sequence in tRNAs without using a nucleic acid template. Adds these three nucleotides in the order of C, C, and A to the tRNA nucleotide-73, using CTP and ATP as substrates and producing inorganic pyrophosphate. tRNA 3'-terminal CCA addition is required both for tRNA processing and repair. Also involved in tRNA surveillance by mediating tandem CCA addition to generate a CCACCA at the 3' terminus of unstable tRNAs. While stable tRNAs receive only 3'-terminal CCA, unstable tRNAs are marked with CCACCA and rapidly degraded. The chain is CCA-adding enzyme from Thermoplasma volcanium (strain ATCC 51530 / DSM 4299 / JCM 9571 / NBRC 15438 / GSS1).